A 230-amino-acid chain; its full sequence is 3,4-dihydroxy-2-butanone 4-phosphate synthase (230 aa).

D-ribulose 5-phosphate is bound by residues 38-39 (RE), D43, 151-155 (RRGHT), and E175. E39 is a Mg(2+) binding site. H154 provides a ligand contact to Mg(2+).

The protein belongs to the DHBP synthase family. As to quaternary structure, homodimer. The cofactor is Mg(2+). It depends on Mn(2+) as a cofactor.

It catalyses the reaction D-ribulose 5-phosphate = (2S)-2-hydroxy-3-oxobutyl phosphate + formate + H(+). Its pathway is cofactor biosynthesis; riboflavin biosynthesis; 2-hydroxy-3-oxobutyl phosphate from D-ribulose 5-phosphate: step 1/1. Catalyzes the conversion of D-ribulose 5-phosphate to formate and 3,4-dihydroxy-2-butanone 4-phosphate. This is 3,4-dihydroxy-2-butanone 4-phosphate synthase from Vibrio harveyi (Beneckea harveyi).